The chain runs to 542 residues: Nif-specific regulatory protein (542 aa).

In terms of domain architecture, GAF spans Asp-29 to Val-170. The 230-residue stretch at Val-203–Thr-432 folds into the Sigma-54 factor interaction domain. ATP contacts are provided by residues Gly-231 to Glu-238 and Ala-294 to Glu-303. The tract at residues Met-433 to Glu-499 is inter-domain linker. Positions 446 and 451 each coordinate a divalent metal cation. The C-terminal DNA-binding domain stretch occupies residues Arg-500–Phe-542. The H-T-H motif DNA-binding region spans Gln-514–Gln-533.

As to quaternary structure, interacts with sigma-54.

In terms of biological role, required for activation of most nif operons, which are directly involved in nitrogen fixation. The polypeptide is Nif-specific regulatory protein (nifA) (Herbaspirillum seropedicae).